The chain runs to 156 residues: Small ribosomal subunit protein uS7 (156 aa).

Belongs to the universal ribosomal protein uS7 family. Part of the 30S ribosomal subunit. Contacts proteins S9 and S11.

Its function is as follows. One of the primary rRNA binding proteins, it binds directly to 16S rRNA where it nucleates assembly of the head domain of the 30S subunit. Is located at the subunit interface close to the decoding center, probably blocks exit of the E-site tRNA. The polypeptide is Small ribosomal subunit protein uS7 (Pelotomaculum thermopropionicum (strain DSM 13744 / JCM 10971 / SI)).